The chain runs to 335 residues: Ferrochelatase (335 aa).

2 residues coordinate Fe cation: H207 and E288.

It belongs to the ferrochelatase family.

It localises to the cytoplasm. It carries out the reaction heme b + 2 H(+) = protoporphyrin IX + Fe(2+). It functions in the pathway porphyrin-containing compound metabolism; protoheme biosynthesis; protoheme from protoporphyrin-IX: step 1/1. Functionally, catalyzes the ferrous insertion into protoporphyrin IX. The polypeptide is Ferrochelatase (Helicobacter pylori (strain G27)).